A 703-amino-acid chain; its full sequence is Elongation factor G (703 aa).

The tr-type G domain occupies 9-292 (ERTRNIGIMA…AVVDYLPGPL (284 aa)). Residues 18-25 (AHIDAGKT), 91-95 (DTPGH), and 145-148 (NKMD) contribute to the GTP site.

It belongs to the TRAFAC class translation factor GTPase superfamily. Classic translation factor GTPase family. EF-G/EF-2 subfamily.

The protein localises to the cytoplasm. Functionally, catalyzes the GTP-dependent ribosomal translocation step during translation elongation. During this step, the ribosome changes from the pre-translocational (PRE) to the post-translocational (POST) state as the newly formed A-site-bound peptidyl-tRNA and P-site-bound deacylated tRNA move to the P and E sites, respectively. Catalyzes the coordinated movement of the two tRNA molecules, the mRNA and conformational changes in the ribosome. The protein is Elongation factor G of Leuconostoc mesenteroides subsp. mesenteroides (strain ATCC 8293 / DSM 20343 / BCRC 11652 / CCM 1803 / JCM 6124 / NCDO 523 / NBRC 100496 / NCIMB 8023 / NCTC 12954 / NRRL B-1118 / 37Y).